The sequence spans 356 residues: MTKIAFTGGGTVGHVSVNLSLIPTALSQGYEALYIGSKNGIEREMIESQLPEIKYYPISSGKLRRYISLENAKDVFKVLKGILDARKVLKKEKPDLLFSKGGFVSVPVVIAAKSLNIPTLIHESDLTPGLANKIALKFAKKIYTTFEETLNYLPKEKADFIGATIREDLKNGNAHNGYQLTGFNENKKVLLVMGGSLGSKKLNSIIRENLDALLQQYQVIHLTGKGLKDAQVKKSGYIQYEFVKEDLTDLLAITDTVISRAGSNAIYEFLTLRIPMLLVPLGLDQSRGDQIDNANHFADKGYAKAIDEEQLTAQILLQELNEMEQERTRIINNMKSYEQSYTKEALFDKMIKDALN.

Positions 166, 196, and 290 each coordinate UDP-N-acetyl-alpha-D-glucosamine.

Belongs to the glycosyltransferase 28 family. MurG subfamily.

Its subcellular location is the cell membrane. It catalyses the reaction Mur2Ac(oyl-L-Ala-gamma-D-Glu-L-Lys-D-Ala-D-Ala)-di-trans,octa-cis-undecaprenyl diphosphate + UDP-N-acetyl-alpha-D-glucosamine = beta-D-GlcNAc-(1-&gt;4)-Mur2Ac(oyl-L-Ala-gamma-D-Glu-L-Lys-D-Ala-D-Ala)-di-trans,octa-cis-undecaprenyl diphosphate + UDP + H(+). The protein operates within cell wall biogenesis; peptidoglycan biosynthesis. In terms of biological role, cell wall formation. Catalyzes the transfer of a GlcNAc subunit on undecaprenyl-pyrophosphoryl-MurNAc-pentapeptide (lipid intermediate I) to form undecaprenyl-pyrophosphoryl-MurNAc-(pentapeptide)GlcNAc (lipid intermediate II). The chain is UDP-N-acetylglucosamine--N-acetylmuramyl-(pentapeptide) pyrophosphoryl-undecaprenol N-acetylglucosamine transferase from Staphylococcus aureus (strain USA300).